Here is a 97-residue protein sequence, read N- to C-terminus: Large ribosomal subunit protein bL28 (97 aa).

This sequence belongs to the bacterial ribosomal protein bL28 family.

The sequence is that of Large ribosomal subunit protein bL28 from Rhizorhabdus wittichii (strain DSM 6014 / CCUG 31198 / JCM 15750 / NBRC 105917 / EY 4224 / RW1) (Sphingomonas wittichii).